The chain runs to 97 residues: Sec-independent protein translocase protein TatA (97 aa).

The chain crosses the membrane as a helical span at residues 1–21 (MGFNIWSLLIILLIVALLFGT). The tract at residues 28-97 (GGDLGGAIRG…SAEHHDRSTS (70 aa)) is disordered. Over residues 37–56 (GFKESMREGEEEEAQKRADG) the composition is skewed to basic and acidic residues. The segment covering 78–87 (QARESSSARQ) has biased composition (low complexity). Over residues 88-97 (SAEHHDRSTS) the composition is skewed to basic and acidic residues.

Belongs to the TatA/E family. In terms of assembly, the Tat system comprises two distinct complexes: a TatABC complex, containing multiple copies of TatA, TatB and TatC subunits, and a separate TatA complex, containing only TatA subunits. Substrates initially bind to the TatABC complex, which probably triggers association of the separate TatA complex to form the active translocon.

Its subcellular location is the cell inner membrane. Part of the twin-arginine translocation (Tat) system that transports large folded proteins containing a characteristic twin-arginine motif in their signal peptide across membranes. TatA could form the protein-conducting channel of the Tat system. In Halorhodospira halophila (strain DSM 244 / SL1) (Ectothiorhodospira halophila (strain DSM 244 / SL1)), this protein is Sec-independent protein translocase protein TatA.